The primary structure comprises 140 residues: Nucleoside diphosphate kinase (140 aa).

Residues K11, F59, R87, T93, R104, and N114 each contribute to the ATP site. Residue H117 is the Pros-phosphohistidine intermediate of the active site.

The protein belongs to the NDK family. As to quaternary structure, homotetramer. Mg(2+) is required as a cofactor.

The protein localises to the cytoplasm. The catalysed reaction is a 2'-deoxyribonucleoside 5'-diphosphate + ATP = a 2'-deoxyribonucleoside 5'-triphosphate + ADP. The enzyme catalyses a ribonucleoside 5'-diphosphate + ATP = a ribonucleoside 5'-triphosphate + ADP. In terms of biological role, major role in the synthesis of nucleoside triphosphates other than ATP. The ATP gamma phosphate is transferred to the NDP beta phosphate via a ping-pong mechanism, using a phosphorylated active-site intermediate. The sequence is that of Nucleoside diphosphate kinase from Francisella tularensis subsp. tularensis (strain SCHU S4 / Schu 4).